We begin with the raw amino-acid sequence, 509 residues long: Heat shock 70 kDa protein 14-A (509 aa).

It belongs to the heat shock protein 70 family. As to quaternary structure, component of ribosome-associated complex (RAC).

The protein resides in the cytoplasm. The protein localises to the cytosol. Functionally, component of the ribosome-associated complex (RAC), a complex involved in folding or maintaining nascent polypeptides in a folding-competent state. This Xenopus laevis (African clawed frog) protein is Heat shock 70 kDa protein 14-A (hspa14-a).